The chain runs to 277 residues: Large ribosomal subunit protein uL2 (277 aa).

The disordered stretch occupies residues R219–K277. Residues D231–K241 are compositionally biased toward basic and acidic residues. Basic residues predominate over residues K256 to K277.

The protein belongs to the universal ribosomal protein uL2 family. Part of the 50S ribosomal subunit. Forms a bridge to the 30S subunit in the 70S ribosome.

Functionally, one of the primary rRNA binding proteins. Required for association of the 30S and 50S subunits to form the 70S ribosome, for tRNA binding and peptide bond formation. It has been suggested to have peptidyltransferase activity; this is somewhat controversial. Makes several contacts with the 16S rRNA in the 70S ribosome. The sequence is that of Large ribosomal subunit protein uL2 from Campylobacter concisus (strain 13826).